The sequence spans 266 residues: Type III pantothenate kinase (266 aa).

6-13 is a binding site for ATP; it reads DAGNTNIV. Residue 107-110 coordinates substrate; that stretch reads GADR. The active-site Proton acceptor is aspartate 109. Aspartate 129 lines the K(+) pocket. Threonine 132 serves as a coordination point for ATP. Position 184 (threonine 184) interacts with substrate.

This sequence belongs to the type III pantothenate kinase family. In terms of assembly, homodimer. NH4(+) is required as a cofactor. Requires K(+) as cofactor.

The protein resides in the cytoplasm. It carries out the reaction (R)-pantothenate + ATP = (R)-4'-phosphopantothenate + ADP + H(+). It participates in cofactor biosynthesis; coenzyme A biosynthesis; CoA from (R)-pantothenate: step 1/5. Functionally, catalyzes the phosphorylation of pantothenate (Pan), the first step in CoA biosynthesis. This chain is Type III pantothenate kinase, found in Acidiphilium cryptum (strain JF-5).